We begin with the raw amino-acid sequence, 85 residues long: UPF0297 protein CD630_12830 (85 aa).

This sequence belongs to the UPF0297 family.

The polypeptide is UPF0297 protein CD630_12830 (Clostridioides difficile (strain 630) (Peptoclostridium difficile)).